Here is a 435-residue protein sequence, read N- to C-terminus: MADQESDKNIEIWKIKKLIKGLETARGNGTSMISLIMPPRDQVARVTKMLADEYGTASNIKSRVNRQSVLSAITSAQQRLKLYNKVPPNGLVLYTGTIVTDDGKEKKVTIDFEPFKPINASLYLCDNKFHTEPLNELLESDDKFGFIVMDGNGTLFGTLSGNTREVLHKFTVDLPKKHGRGGQSALRFARLRMEKRHNYVRKTAELATQFYINPATSQPNVSGLILAGSADFKTELSQSELFDPRLQAKILNVVDVSYGGENGFNQAIELSAEILSNVKFIQEKKLIGKYFEEISQDTGKYVFGVEDTLKALEMGAVETLIVWENLDINRYELKNNTTGEIVIKHLGKDQENNQSNFHDAETNAELEVQEKMPLLEWFANEYKRFGCTLEFVTNKSQEGSQFCRGFGGIGGLLRYQLDMRTFDELSDGEVYEDSD.

N-acetylalanine is present on Ala-2.

The protein belongs to the eukaryotic release factor 1 family. In terms of assembly, heterodimer of two subunits, one of which binds GTP.

The protein localises to the cytoplasm. In terms of biological role, directs the termination of nascent peptide synthesis (translation) in response to the termination codons UAA, UAG and UGA. Modulates plant growth and development. This chain is Eukaryotic peptide chain release factor subunit 1-3 (ERF1-3), found in Arabidopsis thaliana (Mouse-ear cress).